Consider the following 407-residue polypeptide: Ribonuclease Z (407 aa).

The tract at residues 1-308 is ribonuclease Z; sequence MEITFLGTSS…QDFLHYAIPR (308 aa). Residues His-62, His-64, Asp-66, His-67, His-139, Asp-210, and His-268 each coordinate Zn(2+). Asp-66 acts as the Proton acceptor in catalysis. Residues 309 to 407 are unknown; that stretch reads DGQICAEMPP…VDWSALNVLF (99 aa).

Belongs to the RNase Z family. In terms of assembly, homodimer. Zn(2+) serves as cofactor.

The enzyme catalyses Endonucleolytic cleavage of RNA, removing extra 3' nucleotides from tRNA precursor, generating 3' termini of tRNAs. A 3'-hydroxy group is left at the tRNA terminus and a 5'-phosphoryl group is left at the trailer molecule.. Its function is as follows. Zinc phosphodiesterase, which displays some tRNA 3'-processing endonuclease activity. Probably involved in tRNA maturation, by removing a 3'-trailer from precursor tRNA. The polypeptide is Ribonuclease Z (rnz) (Thermosynechococcus vestitus (strain NIES-2133 / IAM M-273 / BP-1)).